The primary structure comprises 175 residues: MGRTLENKQQIVTEIKSLLNDSEMAVVLDYKGLTIKEMSDLRSRLRTTNGICRVTKNSLMRKAIDGDSNWNDLESLLTGTNAFVLIKEDVGGAVKAIQSFQKDTKKSETKGALFEGRLLSDSEIKEIASLPSKEVLMAKIAGALNGVATKIAISINEVPSGLARSLKQHSEKSES.

The protein belongs to the universal ribosomal protein uL10 family. In terms of assembly, part of the ribosomal stalk of the 50S ribosomal subunit. The N-terminus interacts with L11 and the large rRNA to form the base of the stalk. The C-terminus forms an elongated spine to which L12 dimers bind in a sequential fashion forming a multimeric L10(L12)X complex.

In terms of biological role, forms part of the ribosomal stalk, playing a central role in the interaction of the ribosome with GTP-bound translation factors. This Prochlorococcus marinus (strain MIT 9215) protein is Large ribosomal subunit protein uL10.